Consider the following 223-residue polypeptide: MNHEGLRVMGIDPGLTRCGLSVVQAGRGRTVYPVSVGVVRTPSDAELADRLLRLSQAVGEWMDDYTPDVIAIERVFERGNVSTVMNTAHAVGVLILAAAERGLPVHMYTPSEVKKAISGNGRADKKQMTVMITRILGLAEAPKPADAADALALAVCHCWRAPLLMRTRMTAVDLEHRRRQYQGKLGKAKSTLNARNNAQVTGDAQVRAGHPSQFERPDRADPR.

Residues Asp12, Glu73, and Asp146 contribute to the active site. Asp12, Glu73, and Asp146 together coordinate Mg(2+). The disordered stretch occupies residues 182 to 223; sequence QGKLGKAKSTLNARNNAQVTGDAQVRAGHPSQFERPDRADPR. The segment covering 190–202 has biased composition (polar residues); that stretch reads STLNARNNAQVTG. Positions 213–223 are enriched in basic and acidic residues; it reads QFERPDRADPR.

The protein belongs to the RuvC family. In terms of assembly, homodimer which binds Holliday junction (HJ) DNA. The HJ becomes 2-fold symmetrical on binding to RuvC with unstacked arms; it has a different conformation from HJ DNA in complex with RuvA. In the full resolvosome a probable DNA-RuvA(4)-RuvB(12)-RuvC(2) complex forms which resolves the HJ. Requires Mg(2+) as cofactor.

The protein resides in the cytoplasm. The catalysed reaction is Endonucleolytic cleavage at a junction such as a reciprocal single-stranded crossover between two homologous DNA duplexes (Holliday junction).. Functionally, the RuvA-RuvB-RuvC complex processes Holliday junction (HJ) DNA during genetic recombination and DNA repair. Endonuclease that resolves HJ intermediates. Cleaves cruciform DNA by making single-stranded nicks across the HJ at symmetrical positions within the homologous arms, yielding a 5'-phosphate and a 3'-hydroxyl group; requires a central core of homology in the junction. The consensus cleavage sequence is 5'-(A/T)TT(C/G)-3'. Cleavage occurs on the 3'-side of the TT dinucleotide at the point of strand exchange. HJ branch migration catalyzed by RuvA-RuvB allows RuvC to scan DNA until it finds its consensus sequence, where it cleaves and resolves the cruciform DNA. The chain is Crossover junction endodeoxyribonuclease RuvC from Corynebacterium efficiens (strain DSM 44549 / YS-314 / AJ 12310 / JCM 11189 / NBRC 100395).